Reading from the N-terminus, the 192-residue chain is E3 ubiquitin-protein ligase RNF185 (192 aa).

The segment covering 1-14 (MASKGPSASASTEN) has biased composition (polar residues). Residues 1–30 (MASKGPSASASTENSSAGGPSGSSNGTGES) are disordered. At 1–130 (MASKGPSASA…GGFQGFGFGD (130 aa)) the chain is on the cytoplasmic side. Residues 15–27 (SSAGGPSGSSNGT) show a composition bias toward low complexity. Residues 29–80 (ESGGQDSTFECNICLDTAKDAVISLCGHLFCWPCLHQWLETRPNRQVCPVCK) form a required for ubiquitin ligase activity and protection against ER stress-induced cell death region. The RING-type zinc finger occupies 39-80 (CNICLDTAKDAVISLCGHLFCWPCLHQWLETRPNRQVCPVCK). The interval 90-123 (PLYGRGSTGQQDPREKTPPRPQGQRPEPENRGGF) is disordered. Residues 131-151 (GGFQMSFGIGAFPFGIFATAF) form a helical membrane-spanning segment. Residues 152–171 (NINDGRPPPAVPGTPQYVDE) lie on the Mitochondrial intermembrane side of the membrane. A helical transmembrane segment spans residues 172-192 (QFLSRLFLFVALVIMFWLLIA).

As to quaternary structure, interacts with ATG5 and BNIP1.

The protein resides in the mitochondrion outer membrane. It localises to the endoplasmic reticulum membrane. The catalysed reaction is S-ubiquitinyl-[E2 ubiquitin-conjugating enzyme]-L-cysteine + [acceptor protein]-L-lysine = [E2 ubiquitin-conjugating enzyme]-L-cysteine + N(6)-ubiquitinyl-[acceptor protein]-L-lysine.. The protein operates within protein modification; protein ubiquitination. Functionally, E3 ubiquitin-protein ligase that regulates selective mitochondrial autophagy by mediating 'Lys-63'-linked polyubiquitination of BNIP1. Acts in the endoplasmic reticulum (ER)-associated degradation (ERAD) pathway, which targets misfolded proteins that accumulate in the endoplasmic reticulum (ER) for ubiquitination and subsequent proteasome-mediated degradation. Protects cells from ER stress-induced apoptosis. Responsible for the cotranslational ubiquitination and degradation of CFTR in the ERAD pathway. Also acts as a regulator of the innate antiviral response by catalyzing 'Lys-27'-linked polyubiquitination of CGAS, thereby promoting CGAS cyclic GMP-AMP synthase activity. Preferentially associates with the E2 enzymes UBE2J1 and UBE2J2. This Rattus norvegicus (Rat) protein is E3 ubiquitin-protein ligase RNF185 (Rnf185).